Consider the following 298-residue polypeptide: ATP synthase gamma chain (298 aa).

This sequence belongs to the ATPase gamma chain family. F-type ATPases have 2 components, CF(1) - the catalytic core - and CF(0) - the membrane proton channel. CF(1) has five subunits: alpha(3), beta(3), gamma(1), delta(1), epsilon(1). CF(0) has three main subunits: a, b and c.

It is found in the cell inner membrane. Produces ATP from ADP in the presence of a proton gradient across the membrane. The gamma chain is believed to be important in regulating ATPase activity and the flow of protons through the CF(0) complex. This Francisella tularensis subsp. tularensis (strain WY96-3418) protein is ATP synthase gamma chain.